A 390-amino-acid polypeptide reads, in one-letter code: DNA replication and repair protein RecF (390 aa).

An ATP-binding site is contributed by 30-37; it reads GDNAQGKS.

Belongs to the RecF family.

It is found in the cytoplasm. In terms of biological role, the RecF protein is involved in DNA metabolism; it is required for DNA replication and normal SOS inducibility. RecF binds preferentially to single-stranded, linear DNA. It also seems to bind ATP. The chain is DNA replication and repair protein RecF from Trichodesmium erythraeum (strain IMS101).